Reading from the N-terminus, the 101-residue chain is NAD(P)H-quinone oxidoreductase subunit 4L, chloroplastic (101 aa).

3 helical membrane-spanning segments follow: residues 2–22 (MFEH…YGLI), 32–52 (MCLE…SDLF), and 61–81 (IFSI…LAIV).

This sequence belongs to the complex I subunit 4L family. In terms of assembly, NDH is composed of at least 16 different subunits, 5 of which are encoded in the nucleus.

The protein localises to the plastid. Its subcellular location is the chloroplast thylakoid membrane. It carries out the reaction a plastoquinone + NADH + (n+1) H(+)(in) = a plastoquinol + NAD(+) + n H(+)(out). The enzyme catalyses a plastoquinone + NADPH + (n+1) H(+)(in) = a plastoquinol + NADP(+) + n H(+)(out). Its function is as follows. NDH shuttles electrons from NAD(P)H:plastoquinone, via FMN and iron-sulfur (Fe-S) centers, to quinones in the photosynthetic chain and possibly in a chloroplast respiratory chain. The immediate electron acceptor for the enzyme in this species is believed to be plastoquinone. Couples the redox reaction to proton translocation, and thus conserves the redox energy in a proton gradient. The sequence is that of NAD(P)H-quinone oxidoreductase subunit 4L, chloroplastic from Lemna minor (Common duckweed).